The chain runs to 233 residues: MANDGIQRNDNRKGFKTVQFSAYSKEIDVIMKKISFLERNITQQLDTLPHFPKTLPPNHKDCVSRKHRARRGWSSQLKNLLGIYSKEEIFTLDNLAATLHDQVLKLQATLFPNAILKQVHLDNANIENKRILKEITYKYLSNENCKEENKFGTFIVKRIFFGDLSLGVSVLINRIAFESATSSIMVVRSSFIESDFFYEDYLIFDCRAKRRKKLKRKILFISTTMNFNYQTKV.

The tract at residues F196–K212 is the nascent chain stimulates ribosomal stalling during translation by interfering with the conformation of the peptidyl transferase center (PTC), and the translating mRNA by adopting a difficult-to-decode structure at the ribosome decoding center.

In terms of biological role, acts as an endogenous target of the ribosome quality control (RQC) pathway. During translation, the nascent chain has a propensity to stall ribosomes, thereby stimulating activation of the RQC pathway. This is an uncharacterized protein from Saccharomyces cerevisiae (strain ATCC 204508 / S288c) (Baker's yeast).